Reading from the N-terminus, the 369-residue chain is MASSKCLLLPSLPFELIEEILYKIPAESLIRFKSTCKKWYNLITEKRFMYNHLDHYSPERFIRTYDQQIIDPVTEILSDALIPDEFRDLYPIYSMVHCDGLMLCTCRKWDNSLAVWNPVLREIKWIKPSVCYLHTDYVGIGYDDNVSRDNYKILKLLGRLPKDDDSDPNCEIYEFKSDSWKTLVAKFDWDIDIRCNNGVSVKGKMYWIAKKKEDFTIIRFDFSTETFKEICVCPYTLVTRLGCFDGDRLSLLLQGEESQGIEVWMTNKLSDKVVSFSQYFNVTTPDLPALHLQSCMACPGYSIGKRRNIRVWCEGSVDVDDKSYVIITFYEIDEGGVIKQIETASYGQFEYDDPFICCYVYVPSLIPIQ.

One can recognise an F-box domain in the interval 6-53 (CLLLPSLPFELIEEILYKIPAESLIRFKSTCKKWYNLITEKRFMYNHL).

The polypeptide is F-box protein At3g08750 (Arabidopsis thaliana (Mouse-ear cress)).